The following is a 670-amino-acid chain: DNA ligase (670 aa).

Residues 33–37 (DAEYD), 82–83 (SL), and E114 contribute to the NAD(+) site. Residue K116 is the N6-AMP-lysine intermediate of the active site. NAD(+) contacts are provided by R137, E174, K291, and K315. Residues C409, C412, C427, and C433 each contribute to the Zn(2+) site. Residues 593-670 (GAELPLEGKT…TEQDLLELIN (78 aa)) form the BRCT domain.

It belongs to the NAD-dependent DNA ligase family. LigA subfamily. The cofactor is Mg(2+). Requires Mn(2+) as cofactor.

It catalyses the reaction NAD(+) + (deoxyribonucleotide)n-3'-hydroxyl + 5'-phospho-(deoxyribonucleotide)m = (deoxyribonucleotide)n+m + AMP + beta-nicotinamide D-nucleotide.. Functionally, DNA ligase that catalyzes the formation of phosphodiester linkages between 5'-phosphoryl and 3'-hydroxyl groups in double-stranded DNA using NAD as a coenzyme and as the energy source for the reaction. It is essential for DNA replication and repair of damaged DNA. The polypeptide is DNA ligase (Vibrio parahaemolyticus serotype O3:K6 (strain RIMD 2210633)).